We begin with the raw amino-acid sequence, 177 residues long: Large ribosomal subunit protein uL6 (177 aa).

Belongs to the universal ribosomal protein uL6 family. In terms of assembly, part of the 50S ribosomal subunit.

Functionally, this protein binds to the 23S rRNA, and is important in its secondary structure. It is located near the subunit interface in the base of the L7/L12 stalk, and near the tRNA binding site of the peptidyltransferase center. This Rhodopseudomonas palustris (strain BisB18) protein is Large ribosomal subunit protein uL6.